The primary structure comprises 204 residues: Thymidylate kinase (204 aa).

11–18 contributes to the ATP binding site; it reads GLDKSGKT.

This sequence belongs to the thymidylate kinase family.

The enzyme catalyses dTMP + ATP = dTDP + ADP. It participates in pyrimidine metabolism; dTTP biosynthesis. The protein is Thymidylate kinase (TMK) of Vaccinia virus (strain Ankara) (VACV).